Here is a 575-residue protein sequence, read N- to C-terminus: DNA mismatch repair protein MutL (575 aa).

Belongs to the DNA mismatch repair MutL/HexB family.

This protein is involved in the repair of mismatches in DNA. It is required for dam-dependent methyl-directed DNA mismatch repair. May act as a 'molecular matchmaker', a protein that promotes the formation of a stable complex between two or more DNA-binding proteins in an ATP-dependent manner without itself being part of a final effector complex. The sequence is that of DNA mismatch repair protein MutL from Coxiella burnetii (strain CbuG_Q212) (Coxiella burnetii (strain Q212)).